Here is a 501-residue protein sequence, read N- to C-terminus: Iroquois-class homeodomain protein IRX-3 (501 aa).

A DNA-binding region (homeobox; TALE-type) is located at residues 125-188 (FGDPSRPKNA…ANARRRLKKE (64 aa)). Residues 190–381 (KMTWAPRSRT…SPPGAAVAPS (192 aa)) form a disordered region. Composition is skewed to acidic residues over residues 210 to 220 (REEEDEEEDEE) and 227 to 258 (ELEE…DLEN). A phosphoserine mark is found at Ser323 and Ser326. The segment covering 324 to 339 (LPSPPVSLDPCAPAPA) has biased composition (pro residues).

The protein belongs to the TALE/IRO homeobox family.

It localises to the nucleus. Functionally, transcription factor involved in SHH-dependent neural patterning. Together with NKX2-2 and NKX6-1 acts to restrict the generation of motor neurons to the appropriate region of the neural tube. Belongs to the class I proteins of neuronal progenitor factors, which are repressed by SHH signals. Involved in the transcriptional repression of MNX1 in non-motor neuron cells. Acts as a regulator of energy metabolism. The chain is Iroquois-class homeodomain protein IRX-3 (IRX3) from Homo sapiens (Human).